A 362-amino-acid chain; its full sequence is Phosphoserine aminotransferase (362 aa).

L-glutamate-binding residues include Ser9 and Arg42. Pyridoxal 5'-phosphate-binding positions include Gly76–Arg77, Trp102, Thr153, Asp174, and Gln197. At Lys198 the chain carries N6-(pyridoxal phosphate)lysine. Residue Asn239–Thr240 coordinates pyridoxal 5'-phosphate.

This sequence belongs to the class-V pyridoxal-phosphate-dependent aminotransferase family. SerC subfamily. As to quaternary structure, homodimer. Pyridoxal 5'-phosphate is required as a cofactor.

The protein localises to the cytoplasm. It carries out the reaction O-phospho-L-serine + 2-oxoglutarate = 3-phosphooxypyruvate + L-glutamate. The catalysed reaction is 4-(phosphooxy)-L-threonine + 2-oxoglutarate = (R)-3-hydroxy-2-oxo-4-phosphooxybutanoate + L-glutamate. It participates in amino-acid biosynthesis; L-serine biosynthesis; L-serine from 3-phospho-D-glycerate: step 2/3. It functions in the pathway cofactor biosynthesis; pyridoxine 5'-phosphate biosynthesis; pyridoxine 5'-phosphate from D-erythrose 4-phosphate: step 3/5. In terms of biological role, catalyzes the reversible conversion of 3-phosphohydroxypyruvate to phosphoserine and of 3-hydroxy-2-oxo-4-phosphonooxybutanoate to phosphohydroxythreonine. The polypeptide is Phosphoserine aminotransferase (Escherichia coli O127:H6 (strain E2348/69 / EPEC)).